A 107-amino-acid polypeptide reads, in one-letter code: U1-lycotoxin-Ls1b (107 aa).

An N-terminal signal peptide occupies residues 1 to 20; sequence MMKVLVVVALLPTLISYSSS. The propeptide occupies 21–41; it reads EGIDDLEADELLSLMANEQTR. Disulfide bonds link Cys-44–Cys-59, Cys-51–Cys-68, Cys-58–Cys-86, and Cys-70–Cys-84.

The protein belongs to the neurotoxin 19 (CSTX) family. 04 (U1-Lctx) subfamily. Expressed by the venom gland.

The protein localises to the secreted. This is U1-lycotoxin-Ls1b from Lycosa singoriensis (Wolf spider).